Consider the following 365-residue polypeptide: Probable dual-specificity RNA methyltransferase RlmN (365 aa).

Glu-99 acts as the Proton acceptor in catalysis. One can recognise a Radical SAM core domain in the interval 105–344 (QSYGLSVCVT…CVVRQEHGTD (240 aa)). Cys-112 and Cys-349 are oxidised to a cystine. Positions 119, 123, and 126 each coordinate [4Fe-4S] cluster. Residues 171–172 (GE), Ser-203, 227–229 (SLH), and Asn-305 contribute to the S-adenosyl-L-methionine site. Residue Cys-349 is the S-methylcysteine intermediate of the active site.

It belongs to the radical SAM superfamily. RlmN family. It depends on [4Fe-4S] cluster as a cofactor.

It localises to the cytoplasm. The enzyme catalyses adenosine(2503) in 23S rRNA + 2 reduced [2Fe-2S]-[ferredoxin] + 2 S-adenosyl-L-methionine = 2-methyladenosine(2503) in 23S rRNA + 5'-deoxyadenosine + L-methionine + 2 oxidized [2Fe-2S]-[ferredoxin] + S-adenosyl-L-homocysteine. It carries out the reaction adenosine(37) in tRNA + 2 reduced [2Fe-2S]-[ferredoxin] + 2 S-adenosyl-L-methionine = 2-methyladenosine(37) in tRNA + 5'-deoxyadenosine + L-methionine + 2 oxidized [2Fe-2S]-[ferredoxin] + S-adenosyl-L-homocysteine. In terms of biological role, specifically methylates position 2 of adenine 2503 in 23S rRNA and position 2 of adenine 37 in tRNAs. This Lactococcus lactis subsp. cremoris (strain SK11) protein is Probable dual-specificity RNA methyltransferase RlmN.